The chain runs to 992 residues: RNA-binding protein 12 (992 aa).

An RRM 1 domain is found at 304-379 (LYVSVHGMPF…RYVEVSPATE (76 aa)). Residues Ser352 and Ser375 each carry the phosphoserine modification. A disordered region spans residues 393–424 (QSMGPSGQAHPPPQTLPRSKSPSGQKRSRSRS). Residues 408–417 (LPRSKSPSGQ) show a composition bias toward polar residues. 3 positions are modified to phosphoserine: Ser420, Ser422, and Ser424. The region spanning 430–507 (FCVYLKGLPF…RFIQVHPITK (78 aa)) is the RRM 2 domain. Residue Ser525 is modified to Phosphoserine. Residues 849-913 (FGGIPQNFGN…PGFGASSGKP (65 aa)) are disordered. Low complexity predominate over residues 876–887 (LGSVPGHLSGPP). The RRM 3 domain maps to 916-992 (TIIKVQNMPF…GSRKVKLVLG (77 aa)).

It is found in the nucleus. This Mus musculus (Mouse) protein is RNA-binding protein 12 (Rbm12).